The chain runs to 316 residues: LIM/homeobox protein lim-6 (316 aa).

LIM zinc-binding domains follow at residues 40–101 (KLCS…LYGK) and 102–163 (RCRR…ICNF). Residues 186–245 (PKRPRTILNAQQRRQFKTAFERSSKPSRKVREQLANETGLSVRVVQVWFQNQRAKIKKLN) constitute a DNA-binding region (homeobox). Positions 244–297 (LNKKDSDSGDTFKHGPGSEGRSTEDIRSSDDEEESVINLDADEVETSETSSYTD) are disordered. The segment covering 246 to 256 (KKDSDSGDTFK) has biased composition (basic and acidic residues). Residues 273-289 (DDEEESVINLDADEVET) are compositionally biased toward acidic residues.

The protein localises to the nucleus. In terms of biological role, transcription factor. Required for the terminal differentiation of sensory- and motor-neurons, especially GABAergic neurons, and for morphological aspects of uterine development. Plays a role in the cell-type-specific regulation of glutamic acid decarboxylase unc-25. Involved in promoting sleep-like behavioral quiescence, acting by modulating expression of transcription factor aptf-1 in the single sleep-active ring interneuron RIS. Plays a role in regulation of RIS differentiation. Required for the functional asymmetry of the ASER and ASEL chemosensory neuron pair, conferring the ability to discriminate sodium from chloride, perhaps by modulating expression of receptor-type guanylate cyclases, such as gcy-5. Involved in regulating postembryonic axon maintenance in the ventral nerve cord, acting in concert with LIM homeobox protein ceh-14, via modulation of expression of immunoglobulin domain zig genes in the interneuron PVT. May play a role in the functions of the excretory gland cell. The polypeptide is LIM/homeobox protein lim-6 (Caenorhabditis elegans).